We begin with the raw amino-acid sequence, 531 residues long: High affinity cysteine transporter (531 aa).

The Cytoplasmic portion of the chain corresponds to 1–54; it reads MSKVDVKIGADSISSSDEILVPSRLADVTLAFMEENDAAVPEITPEQEKKLKRK. Residues 55 to 75 form a helical membrane-spanning segment; that stretch reads LFLTIFTFVSAINLLLYMDKA. The Lumenal segment spans residues 76-97; it reads TLSYDSILGFFEDTGLTQNTYN. The chain crosses the membrane as a helical span at residues 98-118; that stretch reads TVNTLFYVGFAIGQFPGQYLA. Topologically, residues 119 to 120 are cytoplasmic; it reads QK. Residues 121–141 traverse the membrane as a helical segment; that stretch reads LPLGKFLGGLLATWTILIFLS. At 142-154 the chain is on the lumenal side; sequence CTAYNFSGVVALR. N-linked (GlcNAc...) asparagine glycosylation is present at asparagine 146. Residues 155–175 traverse the membrane as a helical segment; sequence FFLGLTESVVIPILITTMGMF. Residues 176 to 186 lie on the Cytoplasmic side of the membrane; that stretch reads FDASERAAAQP. Residues 187–207 traverse the membrane as a helical segment; sequence FFFAACMGSPIPTGFIAYGVL. Residues 208-218 are Lumenal-facing; it reads HITNPSISLWK. A helical transmembrane segment spans residues 219-239; the sequence is IFTIIIGGLTFIMTVVVILWF. The Cytoplasmic portion of the chain corresponds to 240 to 285; the sequence is PNNPADVKFFSIQERVWIIRRVQASTGSSIEQKVFKKSQFREAMKD. A helical membrane pass occupies residues 286–306; that stretch reads YITWLFGLFFLLQQLANNLPY. Residues 307–324 are Lumenal-facing; that stretch reads QQNLLFEGMGGVDALGST. A helical membrane pass occupies residues 325 to 345; that stretch reads LVSVAGAGFAVVCAFIATLML. Topologically, residues 346-352 are cytoplasmic; that stretch reads AKWKNIS. Residues 353 to 373 form a helical membrane-spanning segment; it reads ALTAIFWTLPALVGSIAAAAL. Residues 374–378 lie on the Lumenal side of the membrane; that stretch reads PWDNK. The helical transmembrane segment at 379-399 threads the bilayer; the sequence is IGILANICMAGQIFGIPFIIA. At 400 to 413 the chain is on the cytoplasmic side; the sequence is LSWASSSASGYTKK. The helical transmembrane segment at 414–436 threads the bilayer; it reads LTRSSVSLFAMGIANIISPQIWR. Topologically, residues 437–447 are lumenal; the sequence is EKDSPRFLPAW. The helical transmembrane segment at 448–468 threads the bilayer; sequence IVQIVLSFSLAPAILLLIHFI. Residues 469 to 498 adopt a coiled-coil conformation; it reads LKRRNNQRLKNYDENLQNYLDRIQLIESEN. Over 469–531 the chain is Cytoplasmic; that stretch reads LKRRNNQRLK…LENETFIYPL (63 aa). Phosphoserine is present on residues serine 500 and serine 501.

Belongs to the major facilitator superfamily. Allantoate permease family.

The protein resides in the cell membrane. It localises to the endoplasmic reticulum membrane. Functionally, high affinity cysteine-specific transporter. Major contributor to cysteine transport when cysteine, at low concentrations, is provided as the sole sulfur source. The polypeptide is High affinity cysteine transporter (YCT1) (Saccharomyces cerevisiae (strain ATCC 204508 / S288c) (Baker's yeast)).